A 91-amino-acid polypeptide reads, in one-letter code: MAKRTKKVGIVGKYGTRYGASLRKMVKKMEITQHSRYTCPFCGKDAMRRGAVGIWNCSKCKKTVAGGAYVYGTVAAATVRSTVRRLRDLKE.

Residues 39–60 (CPFCGKDAMRRGAVGIWNCSKC) form a C4-type zinc finger.

It belongs to the eukaryotic ribosomal protein eL43 family.

This Ostertagia ostertagi (Brown stomach worm) protein is Large ribosomal subunit protein eL43 (rpl-37a).